Reading from the N-terminus, the 318-residue chain is MSRPIILDCDPGHDDAIALILALAHPELNPLAVTTSAGNQTPDKTLKNALRILTLLNRSDIPVAGGAVKPLSRELMIADNVHGETGLDGPALPAPSFQPQAVNAVELMAEKIRQSDKPVTLVPTGPLTNIALLLASHGELHAKIERIVLMGGAAGVGNWTPAAEFNIFVDPEAADIVFKSGIPITMCGLDVTHQAQIMDEDIERIRAIPNPVAKCVAELLDFFMIYHRAPKWGFVGAPLHDPCTIAWLLNPALFDAQDCWVGIETQSELTLGMTVVDRYQLTGKPTNATVLFGIDRQGFVDLLVDSLAVYTPTYLNRR.

Histidine 240 is a catalytic residue.

It belongs to the IUNH family. RihA subfamily.

Its function is as follows. Hydrolyzes cytidine or uridine to ribose and cytosine or uracil, respectively. This is Pyrimidine-specific ribonucleoside hydrolase RihA from Shewanella sp. (strain MR-7).